The primary structure comprises 190 residues: Nascent polypeptide-associated complex subunit alpha (190 aa).

2 disordered regions span residues F20–K42 and S123–K155. Over residues H30–E40 the composition is skewed to basic and acidic residues. Residues S37 to A102 enclose the NAC-A/B domain. A compositionally biased stretch (acidic residues) spans E138 to G151. One can recognise a UBA domain in the interval V152–A189.

This sequence belongs to the NAC-alpha family. In terms of assembly, part of the nascent polypeptide-associated complex (NAC), consisting of EGD2 and EGD1. NAC associates with ribosomes via EGD1.

Its subcellular location is the cytoplasm. The protein localises to the nucleus. In terms of biological role, component of the nascent polypeptide-associated complex (NAC), a dynamic component of the ribosomal exit tunnel, protecting the emerging polypeptides from interaction with other cytoplasmic proteins to ensure appropriate nascent protein targeting. The NAC complex also promotes mitochondrial protein import by enhancing productive ribosome interactions with the outer mitochondrial membrane and blocks the inappropriate interaction of ribosomes translating non-secretory nascent polypeptides with translocation sites in the membrane of the endoplasmic reticulum. EGD2 may also be involved in transcription regulation. The polypeptide is Nascent polypeptide-associated complex subunit alpha (EGD2) (Mycosarcoma maydis (Corn smut fungus)).